Here is a 650-residue protein sequence, read N- to C-terminus: Alpha-agglutinin (650 aa).

The N-terminal stretch at 1 to 19 (MFTFLKIILWLFSLALASA) is a signal peptide. Residues N79, N109, N135, and N248 are each glycosylated (N-linked (GlcNAc...) asparagine). C97 and C114 form a disulfide bridge. Residues C202 and C300 are joined by a disulfide bond. The segment at 216–322 (YDSSNNNVDL…FSTTREFIVY (107 aa)) is ig-like fold domain important for alpha-agglutinin activity, contributing to a functional binding site for a-agglutinin. S282 carries O-linked (Man...) serine glycosylation. 3 O-linked (Man...) threonine glycosylation sites follow: T289, T299, and T303. N306 is a glycosylation site (N-linked (GlcNAc...) asparagine). O-linked (Man...) threonine glycans are attached at residues T307, T308, and T311. S314 carries O-linked (Man...) serine glycosylation. O-linked (Man...) threonine glycans are attached at residues T315, T316, and T329. 4 O-linked (Man...) serine glycosylation sites follow: S331, S334, S335, and S338. O-linked (Man...) threonine glycans are attached at residues T339, T340, T341, T342, and T345. A run of 2 repeats spans residues 339–378 (TTTT…VTTS) and 384–423 (TATT…ETIS). The interval 339 to 423 (TTTTDLTSIN…EVISDVETIS (85 aa)) is 2 X 40 AA tandem repeats. O-linked (Man...) serine glycosylation is present at S346. T349 carries O-linked (Man...) threonine glycosylation. S350 is a glycosylation site (O-linked (Man...) serine). N-linked (GlcNAc...) asparagine glycosylation is found at N364, N402, N485, N501, and N614. Residue G627 is the site of GPI-anchor amidated glycine attachment. Residues 628 to 650 (KASIFFSAELGSIIFLLLSYLLF) constitute a propeptide, removed in mature form.

The protein to C.albicans ALS1. In terms of assembly, interacts with AGA2. N-glycosylated, and O-glycosylated by both PMT1 and PMT2. Post-translationally, the GPI-anchor is attached to the protein in the endoplasmic reticulum and serves to target the protein to the cell surface. There, the glucosamine-inositol phospholipid moiety is cleaved off and the GPI-modified mannoprotein is covalently attached via its lipidless GPI glycan remnant to the 1,6-beta-glucan of the outer cell wall layer.

Its subcellular location is the secreted. The protein localises to the cell wall. It is found in the membrane. In terms of biological role, cell surface glycoprotein promoting cell-cell contact to facilitate mating. S.cerevisiae A and alpha cells express the complementary cell surface glycoproteins A-agglutinin and alpha-, respectively, which interact with one another to promote cellular aggregation during mating. In Saccharomyces cerevisiae (strain ATCC 204508 / S288c) (Baker's yeast), this protein is Alpha-agglutinin (SAG1).